The following is a 192-amino-acid chain: Erythropoietin (192 aa).

An N-terminal signal peptide occupies residues 1-26; sequence MGVPDCLALPLLVTFLLLSLGLPVLG. A disulfide bridge links C33 with C187. 3 N-linked (GlcNAc...) asparagine glycosylation sites follow: N50, N64, and N109.

This sequence belongs to the EPO/TPO family.

Its subcellular location is the secreted. Functionally, hormone involved in the regulation of erythrocyte proliferation and differentiation and the maintenance of a physiological level of circulating erythrocyte mass. Binds to EPOR leading to EPOR dimerization and JAK2 activation thereby activating specific downstream effectors, including STAT1 and STAT3. The protein is Erythropoietin (EPO) of Nannospalax galili (Northern Israeli blind subterranean mole rat).